The sequence spans 243 residues: 2-C-methyl-D-erythritol 4-phosphate cytidylyltransferase (243 aa).

It belongs to the IspD/TarI cytidylyltransferase family. IspD subfamily.

The catalysed reaction is 2-C-methyl-D-erythritol 4-phosphate + CTP + H(+) = 4-CDP-2-C-methyl-D-erythritol + diphosphate. Its pathway is isoprenoid biosynthesis; isopentenyl diphosphate biosynthesis via DXP pathway; isopentenyl diphosphate from 1-deoxy-D-xylulose 5-phosphate: step 2/6. Functionally, catalyzes the formation of 4-diphosphocytidyl-2-C-methyl-D-erythritol from CTP and 2-C-methyl-D-erythritol 4-phosphate (MEP). This is 2-C-methyl-D-erythritol 4-phosphate cytidylyltransferase from Pelodictyon phaeoclathratiforme (strain DSM 5477 / BU-1).